The sequence spans 91 residues: UPF0367 protein cce_2199 (91 aa).

It belongs to the UPF0367 family.

The chain is UPF0367 protein cce_2199 from Crocosphaera subtropica (strain ATCC 51142 / BH68) (Cyanothece sp. (strain ATCC 51142)).